Consider the following 319-residue polypeptide: ATP-dependent 6-phosphofructokinase (319 aa).

An ATP-binding site is contributed by Gly-11. 21–25 lines the ADP pocket; sequence RSIAR. Residues 72–73 and 102–105 each bind ATP; these read RC and GDGS. Residue Asp-103 participates in Mg(2+) binding. 125-127 lines the substrate pocket; the sequence is TID. Asp-127 (proton acceptor) is an active-site residue. Position 154 (Arg-154) interacts with ADP. Substrate-binding positions include Arg-162 and 169–171; that span reads MGR. Residues 185–187, Arg-211, and 213–215 each bind ADP; these read GAE and KLH. Substrate is bound by residues Glu-222, Lys-243, and 249-252; that span reads HVQR.

This sequence belongs to the phosphofructokinase type A (PFKA) family. ATP-dependent PFK group I subfamily. Prokaryotic clade 'B1' sub-subfamily. As to quaternary structure, homotetramer. The cofactor is Mg(2+).

It localises to the cytoplasm. It catalyses the reaction beta-D-fructose 6-phosphate + ATP = beta-D-fructose 1,6-bisphosphate + ADP + H(+). It participates in carbohydrate degradation; glycolysis; D-glyceraldehyde 3-phosphate and glycerone phosphate from D-glucose: step 3/4. Its activity is regulated as follows. Allosterically activated by ADP and other diphosphonucleosides, and allosterically inhibited by phosphoenolpyruvate. Functionally, catalyzes the phosphorylation of D-fructose 6-phosphate to fructose 1,6-bisphosphate by ATP, the first committing step of glycolysis. This Finegoldia magna (strain ATCC 29328 / DSM 20472 / WAL 2508) (Peptostreptococcus magnus) protein is ATP-dependent 6-phosphofructokinase.